A 130-amino-acid polypeptide reads, in one-letter code: MNFPSTKVPWAAVTLLLLLLLPPALLSLGVDAQPLPDCCRQKTCSCRLYELLHGAGNHAAGILTLGKRRPGPPGLQGRLQRLLQANGNHAAGILTMGRRAGAELEPHPCSGRGCPTVTTTALAPRGGSGV.

The signal sequence occupies residues 1-32 (MNFPSTKVPWAAVTLLLLLLLPPALLSLGVDA). Pyrrolidone carboxylic acid is present on glutamine 33. 2 disulfides stabilise this stretch: cysteine 38–cysteine 44 and cysteine 39–cysteine 46. Leucine 65 is modified (leucine amide). A Methionine amide modification is found at methionine 96. Residues 97-130 (GRRAGAELEPHPCSGRGCPTVTTTALAPRGGSGV) constitute a propeptide that is removed on maturation.

Belongs to the orexin family. Specific enzymatic cleavages at paired basic residues yield the different active peptides. As to expression, restricted to neuronal cell bodies of the dorsal and lateral hypothalamus.

The protein resides in the rough endoplasmic reticulum. It localises to the cytoplasmic vesicle. It is found in the synapse. Its function is as follows. Neuropeptides that play a significant role in the regulation of food intake and sleep-wakefulness, possibly by coordinating the complex behavioral and physiologic responses of these complementary homeostatic functions. A broader role in the homeostatic regulation of energy metabolism, autonomic function, hormonal balance and the regulation of body fluids, is also suggested. Functionally, binds to orexin receptors HCRTR1/OX1R and HCRTR2/OX2R with a high affinity. Stimulates food intake. Modulates pituitary luteinizing hormone secretion in an ovarian steroid-dependent manner. Binds to orexin receptor HCRTR2/OX2R only. Stimulates food intake. Modulates pituitary luteinizing hormone secretion in an ovarian steroid-dependent manner. The protein is Hypocretin neuropeptide precursor (Hcrt) of Mus musculus (Mouse).